The chain runs to 589 residues: Putative phospholipase B-like 2 (589 aa).

An N-terminal signal peptide occupies residues 1–41; it reads MVGQMYCYPGSHLARALTRALALALVLALLVGPFLSGLAGA. Asn-88 and Asn-110 each carry an N-linked (GlcNAc...) asparagine glycan. Residues Cys-142 and Cys-152 are joined by a disulfide bond. N-linked (GlcNAc...) asparagine glycosylation is found at Asn-231, Asn-436, and Asn-465. The cysteines at positions 492 and 495 are disulfide-linked. The N-linked (GlcNAc...) asparagine glycan is linked to Asn-515.

This sequence belongs to the phospholipase B-like family. As to quaternary structure, interacts with IGF2R. Post-translationally, the p76 protein is synthesized as a 80 kDa precursor which is then processed into a N-terminal 32 kDa form and a C-terminal 45 kDa form. In terms of processing, glycosylated; contains mannose 6-phosphate sugars. As to expression, ubiquitously expressed, with highest levels in heart, brain and liver.

It localises to the lysosome lumen. Its function is as follows. Putative phospholipase. This chain is Putative phospholipase B-like 2 (PLBD2), found in Homo sapiens (Human).